The chain runs to 777 residues: Ral guanine nucleotide dissociation stimulator-like 2 (777 aa).

Residues Met1–Pro54 are disordered. Phosphoserine is present on Ser13. A compositionally biased stretch (gly residues) spans Gly31–Gly42. A compositionally biased stretch (acidic residues) spans Gln43 to Pro54. Positions Ser88 to Arg212 constitute an N-terminal Ras-GEF domain. Residues Leu243–Pro513 enclose the Ras-GEF domain. Phosphoserine is present on Ser409. Composition is skewed to low complexity over residues Ser581–Pro610 and Ala618–Ser632. Disordered stretches follow at residues Ser581 to Pro644 and Arg734 to Lys766. The span at Gly633–Pro644 shows a compositional bias: gly residues. In terms of domain architecture, Ras-associating spans Asp648–Arg735. A compositionally biased stretch (low complexity) spans Thr740–Ser755.

In terms of assembly, interacts with SAMD9.

Probable guanine nucleotide exchange factor. Putative effector of Ras and/or Rap. Associates with the GTP-bound form of Rap 1A and H-Ras in vitro. In Homo sapiens (Human), this protein is Ral guanine nucleotide dissociation stimulator-like 2 (RGL2).